Reading from the N-terminus, the 67-residue chain is Probable Sec-independent protein translocase protein TatE (67 aa).

Residues 4-21 (ISITKLLVIAALVVLLFG) traverse the membrane as a helical segment. Residues 44-67 (NDDDTGAKTPAASEAPAERLSHKE) are disordered.

The protein belongs to the TatA/E family. TatE subfamily.

The protein localises to the cell inner membrane. Its function is as follows. Part of the twin-arginine translocation (Tat) system that transports large folded proteins containing a characteristic twin-arginine motif in their signal peptide across membranes. TatE shares overlapping functions with TatA. The polypeptide is Probable Sec-independent protein translocase protein TatE (Cronobacter sakazakii (strain ATCC BAA-894) (Enterobacter sakazakii)).